Reading from the N-terminus, the 193-residue chain is Acyl carrier protein phosphodiesterase (193 aa).

It belongs to the AcpH family.

The catalysed reaction is holo-[ACP] + H2O = apo-[ACP] + (R)-4'-phosphopantetheine + H(+). Functionally, converts holo-ACP to apo-ACP by hydrolytic cleavage of the phosphopantetheine prosthetic group from ACP. The protein is Acyl carrier protein phosphodiesterase of Salmonella newport (strain SL254).